The following is a 522-amino-acid chain: Lysine--tRNA ligase (522 aa).

Residues 44–52 (PSGLPHIGT) carry the 'HIGH' region motif. Residues 290–294 (KISKS) carry the 'KMSKS' region motif. K293 lines the ATP pocket.

Belongs to the class-I aminoacyl-tRNA synthetase family.

It localises to the cytoplasm. It catalyses the reaction tRNA(Lys) + L-lysine + ATP = L-lysyl-tRNA(Lys) + AMP + diphosphate. In Rickettsia rickettsii (strain Iowa), this protein is Lysine--tRNA ligase.